We begin with the raw amino-acid sequence, 519 residues long: Glutamate--cysteine ligase (519 aa).

The protein belongs to the glutamate--cysteine ligase type 1 family. Type 1 subfamily.

The catalysed reaction is L-cysteine + L-glutamate + ATP = gamma-L-glutamyl-L-cysteine + ADP + phosphate + H(+). The protein operates within sulfur metabolism; glutathione biosynthesis; glutathione from L-cysteine and L-glutamate: step 1/2. The chain is Glutamate--cysteine ligase from Erwinia tasmaniensis (strain DSM 17950 / CFBP 7177 / CIP 109463 / NCPPB 4357 / Et1/99).